A 140-amino-acid polypeptide reads, in one-letter code: uncharacterized protein (140 aa).

Helical transmembrane passes span 4–24, 56–76, 84–104, and 109–129; these read LLLAGWIFFILLSVCTESFSG, EAFIQKIGHAFSFFVLTYLLW, SAAAGSFAFAFFTEVLQLFFS, and IRDVLIDAVGIGLFYGLYVLA.

It is found in the cell membrane. Its function is as follows. May be important for peptidoglycan remodeling. This is an uncharacterized protein from Bacillus subtilis (strain 168).